A 274-amino-acid chain; its full sequence is MQAATSRESYKIAADRLDEYVRGAESSAVATTAEDLLSVADLLRREPRLRRALVDPARSGADRADLLAGILGGKVGGDALDLLTTLVSHRWSAPSELLDGAERLGVAALLAAADKAGDLGEVEDELFRFGQVVAGQSTLSNVLSDPAAPAAQRATLAGELLAGKARPVTVRLVEVALGGFGGRSFVGALTRLVELAADQRDRQVAYVTVAAPLGAEEERRLVASLSAIYGREVTVKQSVNPEVLGGVSVQVGSDLYDGTVLRRLNESRNALAKR.

Belongs to the ATPase delta chain family. As to quaternary structure, F-type ATPases have 2 components, F(1) - the catalytic core - and F(0) - the membrane proton channel. F(1) has five subunits: alpha(3), beta(3), gamma(1), delta(1), epsilon(1). F(0) has three main subunits: a(1), b(2) and c(10-14). The alpha and beta chains form an alternating ring which encloses part of the gamma chain. F(1) is attached to F(0) by a central stalk formed by the gamma and epsilon chains, while a peripheral stalk is formed by the delta and b chains.

The protein localises to the cell membrane. Functionally, f(1)F(0) ATP synthase produces ATP from ADP in the presence of a proton or sodium gradient. F-type ATPases consist of two structural domains, F(1) containing the extramembraneous catalytic core and F(0) containing the membrane proton channel, linked together by a central stalk and a peripheral stalk. During catalysis, ATP synthesis in the catalytic domain of F(1) is coupled via a rotary mechanism of the central stalk subunits to proton translocation. In terms of biological role, this protein is part of the stalk that links CF(0) to CF(1). It either transmits conformational changes from CF(0) to CF(1) or is implicated in proton conduction. The protein is ATP synthase subunit delta of Salinispora tropica (strain ATCC BAA-916 / DSM 44818 / JCM 13857 / NBRC 105044 / CNB-440).